Reading from the N-terminus, the 390-residue chain is GTPase Obg (390 aa).

Residues 1–159 (MKFVDEASIL…RDLLLELMLL (159 aa)) form the Obg domain. Residues 127-147 (NTRFKSSVNRTPRQKTNGTPG) form a disordered region. Residues 129–145 (RFKSSVNRTPRQKTNGT) show a composition bias toward polar residues. In terms of domain architecture, OBG-type G spans 160 to 333 (ADVGMLGMPN…LCWDVMTFII (174 aa)). GTP-binding positions include 166–173 (GMPNAGKS), 191–195 (FTTLV), 213–216 (DIPG), 283–286 (NKID), and 314–316 (SAA). Mg(2+) is bound by residues S173 and T193.

This sequence belongs to the TRAFAC class OBG-HflX-like GTPase superfamily. OBG GTPase family. Monomer. Mg(2+) serves as cofactor.

It is found in the cytoplasm. An essential GTPase which binds GTP, GDP and possibly (p)ppGpp with moderate affinity, with high nucleotide exchange rates and a fairly low GTP hydrolysis rate. Plays a role in control of the cell cycle, stress response, ribosome biogenesis and in those bacteria that undergo differentiation, in morphogenesis control. The protein is GTPase Obg of Salmonella paratyphi A (strain ATCC 9150 / SARB42).